We begin with the raw amino-acid sequence, 224 residues long: LexA repressor (224 aa).

The H-T-H motif DNA-binding region spans 31–51 (RAEIANTLGFKSANAAEEHLQ). Residues serine 142 and lysine 179 each act as for autocatalytic cleavage activity in the active site.

Belongs to the peptidase S24 family. As to quaternary structure, homodimer.

The catalysed reaction is Hydrolysis of Ala-|-Gly bond in repressor LexA.. In terms of biological role, represses a number of genes involved in the response to DNA damage (SOS response), including recA and lexA. In the presence of single-stranded DNA, RecA interacts with LexA causing an autocatalytic cleavage which disrupts the DNA-binding part of LexA, leading to derepression of the SOS regulon and eventually DNA repair. The chain is LexA repressor from Delftia acidovorans (strain DSM 14801 / SPH-1).